A 2380-amino-acid polypeptide reads, in one-letter code: DNA polymerase epsilon catalytic subunit A (2380 aa).

The segment covering 169 to 196 has biased composition (low complexity); sequence YYNKGNNNNNNHQNYNNNNNQNNNNFNK. Disordered regions lie at residues 169–209, 1178–1210, 1766–1787, 1967–1998, and 2059–2120; these read YYNK…NNSK, FFEK…QQTD, KNTS…NDTT, QQQQ…KNKK, and KIST…TTTS. Acidic residues predominate over residues 1183–1201; that stretch reads EDNDQDNDNDNDNDNDNDN. Over residues 1767 to 1776 the composition is skewed to low complexity; the sequence is NTSNNSNTKN. The segment covering 1777–1787 has biased composition (polar residues); the sequence is GANQNTTNDTT. Positions 1975-1991 are enriched in acidic residues; sequence NADDDDDDDVSENEEEQ. Composition is skewed to low complexity over residues 2059–2081 and 2110–2120; these read KIST…TTKD and SSSSSTTTTTS. 2 residues coordinate Zn(2+): cysteine 2225 and cysteine 2228. The CysA-type zinc-finger motif lies at 2225–2288; that stretch reads CSSCHSCRDI…RVPELSCIQC (64 aa). Residues 2245 to 2258 are compositionally biased toward low complexity; that stretch reads ISSRLSSQQKSNNN. Residues 2245 to 2275 form a disordered region; the sequence is ISSRLSSQQKSNNNDSDDSDDDNEENEGDDD. Positions 2259 to 2275 are enriched in acidic residues; the sequence is DSDDSDDDNEENEGDDD. Zn(2+) contacts are provided by cysteine 2285 and cysteine 2288. Cysteine 2319, cysteine 2322, cysteine 2334, and cysteine 2337 together coordinate [4Fe-4S] cluster. Residues 2319 to 2337 carry the CysB motif motif; sequence CSKCNDVKSDNLGDICPQC.

Belongs to the DNA polymerase type-B family. Consists of three subunits: pole, pole2 and pole3. The cofactor is [4Fe-4S] cluster.

The protein resides in the nucleus. It carries out the reaction DNA(n) + a 2'-deoxyribonucleoside 5'-triphosphate = DNA(n+1) + diphosphate. Functionally, DNA polymerase II participates in chromosomal DNA replication. The polypeptide is DNA polymerase epsilon catalytic subunit A (pole) (Dictyostelium discoideum (Social amoeba)).